Here is a 694-residue protein sequence, read N- to C-terminus: Polyribonucleotide nucleotidyltransferase (694 aa).

2 residues coordinate Mg(2+): Asp485 and Asp491. Residues 552–611 (PRIETMQIKPNKIATVIGPGGKQIRQIIEEAGVQIDINDSGLVSISASSPQAIEKAKSII) form the KH domain. Positions 621–689 (GKIYEGRVTS…EKGQYKLSHK (69 aa)) constitute an S1 motif domain.

This sequence belongs to the polyribonucleotide nucleotidyltransferase family. Requires Mg(2+) as cofactor.

Its subcellular location is the cytoplasm. The catalysed reaction is RNA(n+1) + phosphate = RNA(n) + a ribonucleoside 5'-diphosphate. In terms of biological role, involved in mRNA degradation. Catalyzes the phosphorolysis of single-stranded polyribonucleotides processively in the 3'- to 5'-direction. The polypeptide is Polyribonucleotide nucleotidyltransferase (Chlamydia abortus (strain DSM 27085 / S26/3) (Chlamydophila abortus)).